A 79-amino-acid chain; its full sequence is Short neurotoxin 8 (79 aa).

The N-terminal stretch at 1-21 (MKTLLLTLVMVTIMCLDLGYT) is a signal peptide. Cystine bridges form between Cys24–Cys41, Cys34–Cys59, Cys63–Cys71, and Cys72–Cys77.

The protein belongs to the three-finger toxin family. Short-chain subfamily. Type III alpha-neurotoxin sub-subfamily. In terms of tissue distribution, expressed by the venom gland.

The protein resides in the secreted. Binds with high affinity to muscle nicotinic acetylcholine receptor (nAChR) and hinders acetylcholine binding to the receptor, thereby impairing neuromuscular transmission. Causes muscle paralysis, spasms and increased respiration. This is Short neurotoxin 8 from Pseudonaja textilis (Eastern brown snake).